The primary structure comprises 200 residues: Imidazoleglycerol-phosphate dehydratase (200 aa).

This sequence belongs to the imidazoleglycerol-phosphate dehydratase family.

It is found in the cytoplasm. The catalysed reaction is D-erythro-1-(imidazol-4-yl)glycerol 3-phosphate = 3-(imidazol-4-yl)-2-oxopropyl phosphate + H2O. It functions in the pathway amino-acid biosynthesis; L-histidine biosynthesis; L-histidine from 5-phospho-alpha-D-ribose 1-diphosphate: step 6/9. The sequence is that of Imidazoleglycerol-phosphate dehydratase from Leifsonia xyli subsp. xyli (strain CTCB07).